The chain runs to 93 residues: MSTGNESYNLRYPKGFKGYPYNMYKLEGYGTPKGYITLIGVVATLTVSGLFFAKTRSNKREYPTHNKEWRAKTLAYAKETNADPIYQLPKDKI.

The Mitochondrial matrix portion of the chain corresponds to 2–33 (STGNESYNLRYPKGFKGYPYNMYKLEGYGTPK). Residues 34–53 (GYITLIGVVATLTVSGLFFA) traverse the membrane as a helical segment. Topologically, residues 54 to 93 (KTRSNKREYPTHNKEWRAKTLAYAKETNADPIYQLPKDKI) are mitochondrial intermembrane.

This sequence belongs to the cytochrome c oxidase IV family. Component of the cytochrome c oxidase (complex IV, CIV), a multisubunit enzyme composed of a catalytic core of 3 subunits and seevral supernumerary subunits. The complex exists as a monomer or a dimer and forms supercomplexes (SCs) in the inner mitochondrial membrane with ubiquinol-cytochrome c oxidoreductase (cytochrome b-c1 complex, complex III, CIII).

It is found in the mitochondrion inner membrane. It functions in the pathway energy metabolism; oxidative phosphorylation. Its function is as follows. Component of the cytochrome c oxidase, the last enzyme in the mitochondrial electron transport chain which drives oxidative phosphorylation. The respiratory chain contains 3 multisubunit complexes succinate dehydrogenase (complex II, CII), ubiquinol-cytochrome c oxidoreductase (cytochrome b-c1 complex, complex III, CIII) and cytochrome c oxidase (complex IV, CIV), that cooperate to transfer electrons derived from NADH and succinate to molecular oxygen, creating an electrochemical gradient over the inner membrane that drives transmembrane transport and the ATP synthase. Cytochrome c oxidase is the component of the respiratory chain that catalyzes the reduction of oxygen to water. Electrons originating from reduced cytochrome c in the intermembrane space (IMS) are transferred via the dinuclear copper A center (CU(A)) of subunit 2 and heme A of subunit 1 to the active site in subunit 1, a binuclear center (BNC) formed by heme A3 and copper B (CU(B)). The BNC reduces molecular oxygen to 2 water molecules using 4 electrons from cytochrome c in the IMS and 4 protons from the mitochondrial matrix. The sequence is that of Cytochrome c oxidase polypeptide 6, mitochondrial (cxfA) from Dictyostelium discoideum (Social amoeba).